A 378-amino-acid polypeptide reads, in one-letter code: Neutral protease 2 homolog ARB_04336 (378 aa).

A signal peptide spans 1–19; that stretch reads MKFFTALAAVGALLAPAVA. Positions 20-186 are excised as a propeptide; the sequence is LPTPASEASH…DYFSKGLDKR (167 aa). Cystine bridges form between Cys192–Cys262 and Cys269–Cys287. His311 contacts Zn(2+). Glu312 is a catalytic residue. Zn(2+) contacts are provided by His315 and Asp326.

Belongs to the peptidase M35 family. Zn(2+) serves as cofactor.

The protein localises to the secreted. It catalyses the reaction Preferential cleavage of bonds with hydrophobic residues in P1'. Also 3-Asn-|-Gln-4 and 8-Gly-|-Ser-9 bonds in insulin B chain.. Functionally, secreted metalloproteinase that allows assimilation of proteinaceous substrates. Shows high activities on basic nuclear substrates such as histone and protamine. May be involved in virulence. The chain is Neutral protease 2 homolog ARB_04336 from Arthroderma benhamiae (strain ATCC MYA-4681 / CBS 112371) (Trichophyton mentagrophytes).